A 305-amino-acid chain; its full sequence is Chromatin modification-related protein png2 (305 aa).

The segment at Thr-135–Ser-239 is disordered. The span at Asn-153–Ser-167 shows a compositional bias: low complexity. Polar residues-rich tracts occupy residues Tyr-168–Thr-183 and Lys-195–Ser-210. Tyr-181 bears the Phosphotyrosine mark. Position 183 is a phosphothreonine (Thr-183). 2 positions are modified to phosphoserine: Ser-197 and Ser-198. Residues Thr-211–Leu-223 are compositionally biased toward basic and acidic residues. Residues Gln-248–Leu-297 form a PHD-type zinc finger. Cys-251, Cys-253, Cys-264, Cys-269, His-275, Cys-278, Cys-291, and Cys-294 together coordinate Zn(2+).

Belongs to the ING family. In terms of assembly, interacts with H3K4me3 and to a lesser extent with H3K4me2. Component of the clr6 histone deacetylase complex I'composed of at least clr6, png2, prw1, pst1 and sds3.

It localises to the cytoplasm. Its subcellular location is the nucleus. Component of the clr6 histone deacetylase complex I' responsible for the deacetylation of lysine residues on the N-terminal part of the core histones (H2A, H2B, H3 and H4). Histone deacetylation gives a tag for epigenetic repression and plays an important role in transcriptional regulation, cell cycle progression and developmental events. Has a role in silencing of mating type genes. This chain is Chromatin modification-related protein png2 (png2), found in Schizosaccharomyces pombe (strain 972 / ATCC 24843) (Fission yeast).